Here is a 322-residue protein sequence, read N- to C-terminus: tRNA dimethylallyltransferase (322 aa).

An ATP-binding site is contributed by Gly12–Thr19. Substrate is bound at residue Thr14–Thr19. Interaction with substrate tRNA regions lie at residues Asp37–Leu40 and Gln160–Arg164.

It belongs to the IPP transferase family. Monomer. Requires Mg(2+) as cofactor.

The catalysed reaction is adenosine(37) in tRNA + dimethylallyl diphosphate = N(6)-dimethylallyladenosine(37) in tRNA + diphosphate. Catalyzes the transfer of a dimethylallyl group onto the adenine at position 37 in tRNAs that read codons beginning with uridine, leading to the formation of N6-(dimethylallyl)adenosine (i(6)A). The chain is tRNA dimethylallyltransferase from Pseudomonas putida (Arthrobacter siderocapsulatus).